The primary structure comprises 225 residues: uncharacterized protein (225 aa).

Residues 1-21 form the signal peptide; sequence MSLHYYLFIFWILAFVQFSHA.

As to expression, prismatic layer of shell (at protein level).

It localises to the secreted. This is an uncharacterized protein from Margaritifera margaritifera (Freshwater pearl mussel).